Here is a 108-residue protein sequence, read N- to C-terminus: Nascent polypeptide-associated complex protein (108 aa).

Residues 1 to 68 form the NAC-A/B domain; sequence MNPREIRRMM…LREVKKEVEQ (68 aa).

Belongs to the NAC-alpha family. As to quaternary structure, homodimer. Interacts with the ribosome. Binds ribosomal RNA.

Its function is as follows. Contacts the emerging nascent chain on the ribosome. The protein is Nascent polypeptide-associated complex protein of Picrophilus torridus (strain ATCC 700027 / DSM 9790 / JCM 10055 / NBRC 100828 / KAW 2/3).